We begin with the raw amino-acid sequence, 63 residues long: DNA gyrase inhibitor YacG (63 aa).

Zn(2+) is bound by residues C9, C12, C28, and C32.

It belongs to the DNA gyrase inhibitor YacG family. In terms of assembly, interacts with GyrB. The cofactor is Zn(2+).

Inhibits all the catalytic activities of DNA gyrase by preventing its interaction with DNA. Acts by binding directly to the C-terminal domain of GyrB, which probably disrupts DNA binding by the gyrase. In Salmonella arizonae (strain ATCC BAA-731 / CDC346-86 / RSK2980), this protein is DNA gyrase inhibitor YacG.